We begin with the raw amino-acid sequence, 360 residues long: Peptide chain release factor 1 (360 aa).

At Gln234 the chain carries N5-methylglutamine. The disordered stretch occupies residues 285 to 305 (RAQGIAEDRKSQVGTGDRSER).

Belongs to the prokaryotic/mitochondrial release factor family. In terms of processing, methylated by PrmC. Methylation increases the termination efficiency of RF1.

The protein resides in the cytoplasm. Its function is as follows. Peptide chain release factor 1 directs the termination of translation in response to the peptide chain termination codons UAG and UAA. This is Peptide chain release factor 1 from Clostridium beijerinckii (strain ATCC 51743 / NCIMB 8052) (Clostridium acetobutylicum).